A 263-amino-acid polypeptide reads, in one-letter code: Small ribosomal subunit protein eS4 (263 aa).

Residues 42–104 (LPLVIFLRNR…TNELFRLIYD (63 aa)) form the S4 RNA-binding domain.

Belongs to the eukaryotic ribosomal protein eS4 family.

The protein is Small ribosomal subunit protein eS4 (RpS4) of Spodoptera frugiperda (Fall armyworm).